The sequence spans 473 residues: Photosystem II CP43 reaction center protein (473 aa).

The propeptide occupies 1–14 (MKTLYSLRRFYHVE). Threonine 15 is subject to N-acetylthreonine. Threonine 15 carries the phosphothreonine modification. 5 helical membrane-spanning segments follow: residues 69–93 (LFEVAHFVPEKPMYEQGLILLPHLA), 134–155 (LLGPETLEESFPFFGYVWKDRN), 178–200 (KALYFGGVYDTWAPGGGDVRKIT), 255–275 (KPFAWARRALVWSGEAYLSYS), and 291–312 (WFNNTAYPSEFYGPTGPEASQA). Glutamate 367 serves as a coordination point for [CaMn4O5] cluster. A helical transmembrane segment spans residues 447-471 (RARAAAAGFEKGIDRDFEPVLSMTP).

It belongs to the PsbB/PsbC family. PsbC subfamily. As to quaternary structure, PSII is composed of 1 copy each of membrane proteins PsbA, PsbB, PsbC, PsbD, PsbE, PsbF, PsbH, PsbI, PsbJ, PsbK, PsbL, PsbM, PsbT, PsbX, PsbY, PsbZ, Psb30/Ycf12, at least 3 peripheral proteins of the oxygen-evolving complex and a large number of cofactors. It forms dimeric complexes. Binds multiple chlorophylls and provides some of the ligands for the Ca-4Mn-5O cluster of the oxygen-evolving complex. It may also provide a ligand for a Cl- that is required for oxygen evolution. PSII binds additional chlorophylls, carotenoids and specific lipids. serves as cofactor.

The protein localises to the plastid. It localises to the chloroplast thylakoid membrane. In terms of biological role, one of the components of the core complex of photosystem II (PSII). It binds chlorophyll and helps catalyze the primary light-induced photochemical processes of PSII. PSII is a light-driven water:plastoquinone oxidoreductase, using light energy to abstract electrons from H(2)O, generating O(2) and a proton gradient subsequently used for ATP formation. The polypeptide is Photosystem II CP43 reaction center protein (Aethionema cordifolium (Lebanon stonecress)).